Here is a 301-residue protein sequence, read N- to C-terminus: Ribosomal RNA small subunit methyltransferase H (301 aa).

Residues 31-33, D49, F76, D97, and Q104 each bind S-adenosyl-L-methionine; that span reads GGY.

Belongs to the methyltransferase superfamily. RsmH family.

The protein localises to the cytoplasm. It carries out the reaction cytidine(1402) in 16S rRNA + S-adenosyl-L-methionine = N(4)-methylcytidine(1402) in 16S rRNA + S-adenosyl-L-homocysteine + H(+). Specifically methylates the N4 position of cytidine in position 1402 (C1402) of 16S rRNA. The polypeptide is Ribosomal RNA small subunit methyltransferase H (Ehrlichia ruminantium (strain Gardel)).